The sequence spans 338 residues: Anthocyanidin reductase ((2S)-flavan-3-ol-forming) (338 aa).

Residues 18 to 21 (TGFV), Lys48, 87 to 90 (VATP), and Tyr168 each bind NADP(+).

The protein belongs to the NAD(P)-dependent epimerase/dehydratase family. Dihydroflavonol-4-reductase subfamily. As to expression, expressed in seeds, grape skins, flowers and leaves.

It carries out the reaction a (2S,3R)-flavan-3-ol + 2 NADP(+) = an anthocyanidin with a 3-hydroxy group + 2 NADPH + 2 H(+). The enzyme catalyses a (2S,3S)-flavan-3-ol + 2 NADP(+) = an anthocyanidin with a 3-hydroxy group + 2 NADPH + 2 H(+). The protein operates within secondary metabolite biosynthesis; flavonoid biosynthesis. Its activity is regulated as follows. Inhibited at NaCl concentrations higher than 200 mM. Functionally, produces the terminal flavan-3-ol monomers required for the formation of proanthocyanidins or condensed tannins in leaves and flowers, as well as in the skin and seeds of developing berries. Behaves as a reductase and as a C-3 epimerase. Catalyzes the double reduction of anthocyanidins, producing a mixture of (2S,3S)- and (2S,3R)-flavan-3-ols. The enzyme catalyzes sequential hydride transfers to C-2 and C-4, respectively and epimerization at C-3 is achieved by tautomerization that occurs between the two hydride transfers. Converts cyanidin, pelargonidin and delphinidin into catechin and epicatechin, afzelechin and epiafzelechin, and gallocatechin and epigallocatechin respectively. The chain is Anthocyanidin reductase ((2S)-flavan-3-ol-forming) from Vitis vinifera (Grape).